A 97-amino-acid polypeptide reads, in one-letter code: Prophage lipoprotein Bor homolog (97 aa).

Residues 1 to 16 form the signal peptide; that stretch reads MKKMLLATALALLITG. Residue Cys-17 is the site of N-palmitoyl cysteine attachment. Cys-17 is lipidated: S-diacylglycerol cysteine.

The protein belongs to the lambda phage bor family.

It localises to the cell membrane. The chain is Prophage lipoprotein Bor homolog (borD) from Escherichia coli (strain K12).